Reading from the N-terminus, the 293-residue chain is Deubiquitinase OTUD6B (293 aa).

Disordered stretches follow at residues 1–43 (MEEV…RRKQ) and 57–114 (QKHE…LEKE). An OTU domain is found at 147 to 284 (LQIKEISSDG…GEHYNSVEPL (138 aa)). Residues 152–158 (ISSDGHC) are cys-loop. Residue Asp155 is part of the active site. Cys158 serves as the catalytic Nucleophile. The interval 219–229 (VADTAAWGGQL) is variable-loop. Residues 267–277 (YMRHAYGLGEH) are his-loop. Residue His277 is part of the active site.

It carries out the reaction Thiol-dependent hydrolysis of ester, thioester, amide, peptide and isopeptide bonds formed by the C-terminal Gly of ubiquitin (a 76-residue protein attached to proteins as an intracellular targeting signal).. In terms of biological role, deubiquitinating enzyme that may play a role in the ubiquitin-dependent regulation of different cellular processes. This is Deubiquitinase OTUD6B (otud6b) from Danio rerio (Zebrafish).